We begin with the raw amino-acid sequence, 141 residues long: Large ribosomal subunit protein uL16 (141 aa).

The protein belongs to the universal ribosomal protein uL16 family. As to quaternary structure, part of the 50S ribosomal subunit.

Functionally, binds 23S rRNA and is also seen to make contacts with the A and possibly P site tRNAs. In Campylobacter hominis (strain ATCC BAA-381 / DSM 21671 / CCUG 45161 / LMG 19568 / NCTC 13146 / CH001A), this protein is Large ribosomal subunit protein uL16.